A 247-amino-acid chain; its full sequence is MIVLTQSGTLLFDQRFKLSKFLFVVIATGFPLLLQQASLIYGYNHEQIYRICRSFLYILPLLNCKRGRISTSGLQLPRHLHYECLEWGLLCGTHPAIQIVGPTIVIKLDDPTTAAAYRSELLRVSSSSYIQNAAGLSNGWGHDMEAFVRNAICLLELRERSIPQSGLRDLMGNHQHLVRSLLDACKVDHFVPLDFQHRSLMLNFARLYNQLDLQGRAKSFRALTGFPVYVPSEDYLEGSFLQKELQE.

Residues 76-95 (LPRHLHYECLEWGLLCGTHP) form the F-box-like domain.

It belongs to the polerovirus P0 protein family.

In terms of biological role, suppressor of RNA-mediated gene silencing, also known as post-transcriptional gene silencing (PTGS), a mechanism of plant viral defense that limits the accumulation of viral RNAs. The P0 protein suppresses local PTGS using its F-box-like domain to mediate destabilization and degradation of the AGO1 protein, although not via an interaction with host SKP1A. Participates, together with the proteins P1 and P7, in the inhibition of the induction of aphid-induced host phytohormones. This could play a role in the attraction to the infected plants by aphids. The protein is Suppressor of silencing P0 of Potato leafroll virus (strain Potato/Netherlands/Wageningen/1989) (PLrV).